The sequence spans 247 residues: tRNA (guanine-N(1)-)-methyltransferase (247 aa).

S-adenosyl-L-methionine-binding positions include Gly115 and 135 to 140; that span reads IGDYVL.

The protein belongs to the RNA methyltransferase TrmD family. Homodimer.

Its subcellular location is the cytoplasm. The catalysed reaction is guanosine(37) in tRNA + S-adenosyl-L-methionine = N(1)-methylguanosine(37) in tRNA + S-adenosyl-L-homocysteine + H(+). Functionally, specifically methylates guanosine-37 in various tRNAs. The sequence is that of tRNA (guanine-N(1)-)-methyltransferase from Alkaliphilus metalliredigens (strain QYMF).